We begin with the raw amino-acid sequence, 78 residues long: UPF0335 protein A1C_00850 (78 aa).

The protein belongs to the UPF0335 family.

This Rickettsia akari (strain Hartford) protein is UPF0335 protein A1C_00850.